Reading from the N-terminus, the 255-residue chain is Hydroxyethylthiazole kinase (255 aa).

Residue M38 coordinates substrate. Residues R114 and T160 each contribute to the ATP site. G187 serves as a coordination point for substrate.

The protein belongs to the Thz kinase family. Requires Mg(2+) as cofactor.

It catalyses the reaction 5-(2-hydroxyethyl)-4-methylthiazole + ATP = 4-methyl-5-(2-phosphooxyethyl)-thiazole + ADP + H(+). Its pathway is cofactor biosynthesis; thiamine diphosphate biosynthesis; 4-methyl-5-(2-phosphoethyl)-thiazole from 5-(2-hydroxyethyl)-4-methylthiazole: step 1/1. In terms of biological role, catalyzes the phosphorylation of the hydroxyl group of 4-methyl-5-beta-hydroxyethylthiazole (THZ). The sequence is that of Hydroxyethylthiazole kinase from Lysinibacillus sphaericus (strain C3-41).